Consider the following 290-residue polypeptide: Cilia- and flagella-associated protein 298 (290 aa).

The protein belongs to the CFAP298 family. Interacts with ZMYND10. In terms of tissue distribution, expressed in the trachea (at protein level).

Its subcellular location is the cytoplasm. The protein resides in the cytoskeleton. It is found in the cilium basal body. Plays a role in motile cilium function, possibly by acting on outer dynein arm assembly. Seems to be important for initiation rather than maintenance of cilium motility. Required for correct positioning of cilia at the apical cell surface, suggesting an additional role in the planar cell polarity (PCP) pathway. May suppress canonical Wnt signaling activity. The polypeptide is Cilia- and flagella-associated protein 298 (Rattus norvegicus (Rat)).